Consider the following 98-residue polypeptide: Tan_12Cys (98 aa).

Residues 1-21 form the signal peptide; the sequence is MNLKVLFLLAMVLVTLCLGED. The propeptide occupies 22–28; the sequence is RVTDRRK.

The protein belongs to the teretoxin C (TC) superfamily. Contains 6 disulfide bonds. In terms of tissue distribution, expressed by the venom duct.

Its subcellular location is the secreted. The sequence is that of Tan_12Cys from Terebra anilis (Auger snail).